Consider the following 305-residue polypeptide: MSIRILPENEIKQAASSFQNPPLLFANPKNLYFRRAKRLRQLAENNPFGDYLEFAANLSEVQLDLLENHPIANYAEKLTACIEESNGQKPLNAKTFKRSSEWRELLLLLTEKFKPYANDTMLATIELLEKSSTSELEALADDLLNERYEAVGADKAVFLWAALSLYWTQLAQQLPRNTQTEVGERHTCPVCDSAPIVSVVHFGDTQGLRYLHCSLCESEWNMVRSQCSVCDQSGKLDYWSIDSVDAPVKAESCGDCESYLKVLYQEKDPHVEPVADDLGTLFLDAEMEQKGFARSGLNPFLFQVE.

The protein belongs to the FdhE family.

It is found in the cytoplasm. Functionally, necessary for formate dehydrogenase activity. The protein is Protein FdhE homolog of Actinobacillus pleuropneumoniae serotype 7 (strain AP76).